Here is a 274-residue protein sequence, read N- to C-terminus: Diaminopimelate epimerase (274 aa).

Substrate-binding residues include asparagine 11, glutamine 44, and asparagine 64. The active-site Proton donor is cysteine 73. Substrate-binding positions include 74–75 (GN), asparagine 157, asparagine 190, and 208–209 (ER). The active-site Proton acceptor is cysteine 217. Residue 218 to 219 (GS) participates in substrate binding.

It belongs to the diaminopimelate epimerase family. Homodimer.

It is found in the cytoplasm. The enzyme catalyses (2S,6S)-2,6-diaminopimelate = meso-2,6-diaminopimelate. The protein operates within amino-acid biosynthesis; L-lysine biosynthesis via DAP pathway; DL-2,6-diaminopimelate from LL-2,6-diaminopimelate: step 1/1. Catalyzes the stereoinversion of LL-2,6-diaminopimelate (L,L-DAP) to meso-diaminopimelate (meso-DAP), a precursor of L-lysine and an essential component of the bacterial peptidoglycan. This Serratia proteamaculans (strain 568) protein is Diaminopimelate epimerase.